Consider the following 84-residue polypeptide: Kidney-associated antigen 1 (84 aa).

The interval 31–84 (PGAAAAHLPRWPPPQLAASRREAPPLSQRPHRTQGAGSPPETNEKLTNPQVKEK) is disordered. Residues 75–84 (KLTNPQVKEK) show a composition bias toward polar residues.

Expressed in testis and kidney, and, at lower levels, in urinary bladder and liver. Expressed by a high proportion of tumors of various histologic origin, including melanomas, sarcomas and colorectal carcinomas.

This chain is Kidney-associated antigen 1 (KAAG1), found in Homo sapiens (Human).